Reading from the N-terminus, the 301-residue chain is Probable alpha-L-glutamate ligase 2 (301 aa).

Residues 104–287 enclose the ATP-grasp domain; that stretch reads LQLLSRKSIG…VADKIIQFIE (184 aa). ATP-binding positions include Lys141, 178 to 179, Asp187, and 211 to 213; these read EY and RSN. The Mg(2+) site is built by Asp248, Glu260, and Asn262. Asp248, Glu260, and Asn262 together coordinate Mn(2+).

This sequence belongs to the RimK family. Mg(2+) is required as a cofactor. Requires Mn(2+) as cofactor.

This chain is Probable alpha-L-glutamate ligase 2, found in Shewanella denitrificans (strain OS217 / ATCC BAA-1090 / DSM 15013).